We begin with the raw amino-acid sequence, 85 residues long: MAHKKAGGSTRNGRDSNAQRLGVKRFGGESVLAGNIIVRQRGTKFHAGTNVGCGKDHTLFALTDGKVQFEVKGPKNRKYISIVAE.

The interval 1-21 is disordered; sequence MAHKKAGGSTRNGRDSNAQRL. Residues 9–19 show a composition bias toward polar residues; the sequence is STRNGRDSNAQ.

Belongs to the bacterial ribosomal protein bL27 family.

This chain is Large ribosomal subunit protein bL27, found in Pectobacterium carotovorum subsp. carotovorum (strain PC1).